We begin with the raw amino-acid sequence, 306 residues long: Low-density lipoprotein receptor class A domain-containing protein 4 (306 aa).

The Lumenal portion of the chain corresponds to 1-64; it reads MPEAGFQATN…PPGIFNSELE (64 aa). The 33-residue stretch at 16-48 folds into the LDL-receptor class A domain; it reads KFTCTSGKCLYLGSLVCNQQNDCGDNSDEENCL. Cystine bridges form between Cys19-Cys38 and Cys32-Cys47. Residues 65 to 85 form a helical membrane-spanning segment; it reads FAQIIIIVVVVTVMVVVIVCL. Over 86 to 306 the chain is Cytoplasmic; sequence LNHYKVSTRS…GKDRKPGNLV (221 aa). Residues 180 to 183 carry the PPxY motif 1 motif; the sequence is PPPY. Residues 208 to 211 carry the SMAD interaction motif (SIM) motif; it reads PPNR. The PPxY motif 2 signature appears at 252–255; the sequence is PPTY. Residues 286–306 are disordered; the sequence is NNAESTIVPIKGKDRKPGNLV. The segment covering 296 to 306 has biased composition (basic and acidic residues); that stretch reads KGKDRKPGNLV.

The protein belongs to the PMEPA1 family. In terms of assembly, interacts with PMEPA1. Interacts (via the SMAD interaction motif) with SMAD2 and SMAD3. As to expression, expressed in lymphocytes.

The protein resides in the early endosome membrane. Its function is as follows. Functions as a negative regulator of TGF-beta signaling and thereby probably plays a role in cell proliferation, differentiation, apoptosis, motility, extracellular matrix production and immunosuppression. In the canonical TGF-beta pathway, ZFYVE9/SARA recruits the intracellular signal transducer and transcriptional modulators SMAD2 and SMAD3 to the TGF-beta receptor. Phosphorylated by the receptor, SMAD2 and SMAD3 then form a heteromeric complex with SMAD4 that translocates to the nucleus to regulate transcription. Through interaction with SMAD2 and SMAD3, LDLRAD4 may compete with ZFYVE9 and SMAD4 and prevent propagation of the intracellular signal. This Homo sapiens (Human) protein is Low-density lipoprotein receptor class A domain-containing protein 4 (LDLRAD4).